Reading from the N-terminus, the 100-residue chain is Large ribosomal subunit protein eL21 (100 aa).

Positions methionine 1–arginine 21 are enriched in basic residues. The segment at methionine 1 to glutamate 22 is disordered.

It belongs to the eukaryotic ribosomal protein eL21 family.

This is Large ribosomal subunit protein eL21 from Pyrobaculum neutrophilum (strain DSM 2338 / JCM 9278 / NBRC 100436 / V24Sta) (Thermoproteus neutrophilus).